Here is a 293-residue protein sequence, read N- to C-terminus: MKIRIAARGSKLSRIQVDMLGEKLKKIGIEYEIIDIKTKADLFSTEPLSKLGKGVFEKEVNEAVLEGKADIAVHSMKDILSEINPSLEIFAVLERDPPYDILIAEKNLDKLDSNITIGTSSIRRKNFLKYIKPEINTKDIRGNVDTRIRKYLSKEYQGLILAEASLKRLNMTMNYHRLNVYDFTPEANQGIIVALGRKKDEKIKEIFKEINHKDTLDEALAERAVISLVGGGCHSPIGVLFKKEGKEFYGIASYSDGKKKITVSISKPGDPYTIGSELGLLLKKEMKNENIIP.

Cysteine 233 is modified (S-(dipyrrolylmethanemethyl)cysteine).

This sequence belongs to the HMBS family. Dipyrromethane serves as cofactor.

The catalysed reaction is 4 porphobilinogen + H2O = hydroxymethylbilane + 4 NH4(+). It functions in the pathway porphyrin-containing compound metabolism; protoporphyrin-IX biosynthesis; coproporphyrinogen-III from 5-aminolevulinate: step 2/4. Tetrapolymerization of the monopyrrole PBG into the hydroxymethylbilane pre-uroporphyrinogen in several discrete steps. This is Probable porphobilinogen deaminase from Saccharolobus islandicus (strain M.16.27) (Sulfolobus islandicus).